A 349-amino-acid polypeptide reads, in one-letter code: Leukotriene B4 receptor 1 (349 aa).

Topologically, residues 1–19 (MNTTSPAAPSSSGVSFISL) are extracellular. A glycan (N-linked (GlcNAc...) asparagine) is linked at asparagine 2. Residues 20-42 (LVIIVLSVALAVGLPGNSFVVWS) traverse the membrane as a helical segment. The Cytoplasmic portion of the chain corresponds to 43-54 (ILAKLRKRSVTA). Residues 55 to 75 (LMVLHLALADLAVLLTAPFFL) form a helical membrane-spanning segment. Topologically, residues 76–91 (YSVAQGTWTFGLSSCR) are extracellular. A helical membrane pass occupies residues 92–113 (LFHYVCGVSMYASVLLIMTMSL). Topologically, residues 114 to 138 (DRSLAVALPFVSQKLRTKAVAWRVL) are cytoplasmic. A helical membrane pass occupies residues 139-159 (AGIWVMSVLLATPVLLYRTVH). Topologically, residues 160 to 179 (LGLNNRSLTCFLKYPSERHR) are extracellular. An N-linked (GlcNAc...) asparagine glycan is attached at asparagine 164. The chain crosses the membrane as a helical span at residues 180–200 (AFHLFFEVITGFLLPFLVVVA). At 201-222 (SYCDIGRRLRARRFRRSRRTGR) the chain is on the cytoplasmic side. The chain crosses the membrane as a helical span at residues 223-243 (LVALIILAFAAFWLPYHVVNL). The Extracellular portion of the chain corresponds to 244-269 (AEGFRAAAGKALGSGPVGRRLLLARH). A helical transmembrane segment spans residues 270-290 (VLITLAFLSSSVNPLLYACAG). The Cytoplasmic portion of the chain corresponds to 291-349 (GGLLRSAGVGFIAKLLEGTGSETSSSRRKGTLAQTLRGTPASPEPDPAESLTASTNPLE). Residues 311–349 (SETSSSRRKGTLAQTLRGTPASPEPDPAESLTASTNPLE) form a disordered region.

The protein belongs to the G-protein coupled receptor 1 family. Phosphorylated by GRK6 upon leukotriene B4 binding; which promotes desensitization.

It localises to the cell membrane. Its function is as follows. Receptor for extracellular ATP &gt; UTP and ADP. The activity of this receptor is mediated by G proteins which activate a phosphatidylinositol-calcium second messenger system. May be the cardiac P2Y receptor involved in the regulation of cardiac muscle contraction through modulation of L-type calcium currents. Is a receptor for leukotriene B4, a potent chemoattractant involved in inflammation and immune response. The chain is Leukotriene B4 receptor 1 (LTB4R) from Bos taurus (Bovine).